A 631-amino-acid polypeptide reads, in one-letter code: Chaperone protein HtpG (631 aa).

Positions 1 to 342 are a; substrate-binding; sequence MSEQTANKET…SNDLPLNVSR (342 aa). The segment at 343-559 is b; it reads EILQDNKVTQ…DFEMGTQMAK (217 aa). The tract at residues 560–631 is c; sequence LLEAAGQAAP…LSAMNQLLAK (72 aa).

Belongs to the heat shock protein 90 family. As to quaternary structure, homodimer.

The protein localises to the cytoplasm. Functionally, molecular chaperone. Has ATPase activity. This is Chaperone protein HtpG from Aliivibrio fischeri (strain ATCC 700601 / ES114) (Vibrio fischeri).